A 196-amino-acid polypeptide reads, in one-letter code: Ribosome maturation factor RimP (196 aa).

The interval 164–196 (LAPQKPNKPGPKKPGHEKKKPSNESAAGKPRAE) is disordered. Positions 173-182 (GPKKPGHEKK) are enriched in basic residues.

Belongs to the RimP family.

It is found in the cytoplasm. Required for maturation of 30S ribosomal subunits. The protein is Ribosome maturation factor RimP of Xanthomonas euvesicatoria pv. vesicatoria (strain 85-10) (Xanthomonas campestris pv. vesicatoria).